Here is a 123-residue protein sequence, read N- to C-terminus: Cysteine proteinase inhibitor 8 (123 aa).

The N-terminal stretch at 1 to 19 (MARIPLLLALLLAVSAAAA) is a signal peptide. Residues 33-91 (GGWSPITDVGDPHIQELGGWAVERHASLSSDGLRFRRVTSGEQQVVSGMNYRLVVSASD) enclose the Cystatin domain. A Secondary area of contact motif is present at residues 76 to 80 (QVVSG).

This sequence belongs to the cystatin family. Phytocystatin subfamily.

It localises to the secreted. In terms of biological role, specific inhibitor of cysteine proteinases. Probably involved in the regulation of endogenous processes and in defense against pests and pathogens. The protein is Cysteine proteinase inhibitor 8 of Oryza sativa subsp. japonica (Rice).